Here is a 426-residue protein sequence, read N- to C-terminus: Elongation factor 1-alpha (426 aa).

One can recognise a tr-type G domain in the interval 5-221 (KPHINLAVIG…NALKEPEKPT (217 aa)). Residues 14–21 (GHIDHGKS) are G1. 14–21 (GHIDHGKS) contributes to the GTP binding site. Serine 21 contacts Mg(2+). The segment at 70-74 (GITID) is G2. The G3 stretch occupies residues 91–94 (DCPG). Residues 91-95 (DCPGH) and 146-149 (NKMD) contribute to the GTP site. Residues 146–149 (NKMD) are G4. Positions 185-187 (SAF) are G5.

Belongs to the TRAFAC class translation factor GTPase superfamily. Classic translation factor GTPase family. EF-Tu/EF-1A subfamily.

It localises to the cytoplasm. It carries out the reaction GTP + H2O = GDP + phosphate + H(+). GTP hydrolase that promotes the GTP-dependent binding of aminoacyl-tRNA to the A-site of ribosomes during protein biosynthesis. The protein is Elongation factor 1-alpha of Methanocella arvoryzae (strain DSM 22066 / NBRC 105507 / MRE50).